A 347-amino-acid polypeptide reads, in one-letter code: Holliday junction branch migration complex subunit RuvB (347 aa).

The segment at 4–185 (TDRLITPAPL…FGIISRLEFY (182 aa)) is large ATPase domain (RuvB-L). Residues Leu24, Arg25, Gly66, Lys69, Thr70, Thr71, 132-134 (EDY), Arg175, Tyr185, and Arg222 contribute to the ATP site. Thr70 serves as a coordination point for Mg(2+). A small ATPAse domain (RuvB-S) region spans residues 186–256 (SVEELTQIVM…VADAALLMLD (71 aa)). The interval 259 to 347 (AIGLDVMDRK…LSADLWDEKQ (89 aa)) is head domain (RuvB-H). Residues Arg295, Arg314, and Arg319 each contribute to the DNA site.

The protein belongs to the RuvB family. As to quaternary structure, homohexamer. Forms an RuvA(8)-RuvB(12)-Holliday junction (HJ) complex. HJ DNA is sandwiched between 2 RuvA tetramers; dsDNA enters through RuvA and exits via RuvB. An RuvB hexamer assembles on each DNA strand where it exits the tetramer. Each RuvB hexamer is contacted by two RuvA subunits (via domain III) on 2 adjacent RuvB subunits; this complex drives branch migration. In the full resolvosome a probable DNA-RuvA(4)-RuvB(12)-RuvC(2) complex forms which resolves the HJ.

It localises to the cytoplasm. It catalyses the reaction ATP + H2O = ADP + phosphate + H(+). In terms of biological role, the RuvA-RuvB-RuvC complex processes Holliday junction (HJ) DNA during genetic recombination and DNA repair, while the RuvA-RuvB complex plays an important role in the rescue of blocked DNA replication forks via replication fork reversal (RFR). RuvA specifically binds to HJ cruciform DNA, conferring on it an open structure. The RuvB hexamer acts as an ATP-dependent pump, pulling dsDNA into and through the RuvAB complex. RuvB forms 2 homohexamers on either side of HJ DNA bound by 1 or 2 RuvA tetramers; 4 subunits per hexamer contact DNA at a time. Coordinated motions by a converter formed by DNA-disengaged RuvB subunits stimulates ATP hydrolysis and nucleotide exchange. Immobilization of the converter enables RuvB to convert the ATP-contained energy into a lever motion, pulling 2 nucleotides of DNA out of the RuvA tetramer per ATP hydrolyzed, thus driving DNA branch migration. The RuvB motors rotate together with the DNA substrate, which together with the progressing nucleotide cycle form the mechanistic basis for DNA recombination by continuous HJ branch migration. Branch migration allows RuvC to scan DNA until it finds its consensus sequence, where it cleaves and resolves cruciform DNA. This is Holliday junction branch migration complex subunit RuvB from Nitrosospira multiformis (strain ATCC 25196 / NCIMB 11849 / C 71).